The chain runs to 355 residues: Probable protein phosphatase 2C 21 (355 aa).

In terms of domain architecture, PPM-type phosphatase spans 23 to 329 (RFGLSSMQGW…DNMTIILVQF (307 aa)). Positions 57, 58, 272, and 320 each coordinate Mn(2+). Residues 329 to 355 (FKKPNPSETEPEDSKPEPSEDEPSSSS) form a disordered region.

Belongs to the PP2C family. The cofactor is Mg(2+). Requires Mn(2+) as cofactor.

It catalyses the reaction O-phospho-L-seryl-[protein] + H2O = L-seryl-[protein] + phosphate. It carries out the reaction O-phospho-L-threonyl-[protein] + H2O = L-threonyl-[protein] + phosphate. In Arabidopsis thaliana (Mouse-ear cress), this protein is Probable protein phosphatase 2C 21 (PPC4-2).